The chain runs to 276 residues: Chlorophyll a-b binding protein CP29.3, chloroplastic (276 aa).

Residues 1–29 constitute a chloroplast transit peptide; the sequence is MATTTAAAASGIFGIRIQDPRPGTGRVQA. The segment at 1 to 53 is disordered; the sequence is MATTTAAAASGIFGIRIQDPRPGTGRVQARFGFSFGKKKPAPPPKKSRQVQDD. Over residues 36-48 the composition is skewed to basic residues; sequence GKKKPAPPPKKSR. Residue tryptophan 59 participates in chlorophyll b binding. Chlorophyll a-binding residues include phenylalanine 79, glutamate 141, and histidine 144. A helical membrane pass occupies residues 147 to 167; that stretch reads WAMLGTLGAIAVEALTGIAWQ. Chlorophyll a is bound at residue leucine 181. A helical membrane pass occupies residues 185–205; sequence LPFSLTTLIWIEVLVVGYIEF. Chlorophyll b contacts are provided by glutamate 204 and arginine 207. The chlorophyll a site is built by glutamate 242, histidine 245, arginine 247, and glutamine 259. Residues 248–268 traverse the membrane as a helical segment; the sequence is LAMVAFLIFALQAAFTGKGPV.

This sequence belongs to the light-harvesting chlorophyll a/b-binding (LHC) protein family. The LHC complex consists of chlorophyll a-b binding proteins. Requires Binds at least 14 chlorophylls (8 Chl-a and 6 Chl-b) and carotenoids such as lutein and neoxanthin. as cofactor. Photoregulated by reversible phosphorylation of its threonine residues.

The protein localises to the plastid. It localises to the chloroplast thylakoid membrane. Its function is as follows. The light-harvesting complex (LHC) functions as a light receptor, it captures and delivers excitation energy to photosystems with which it is closely associated. This chain is Chlorophyll a-b binding protein CP29.3, chloroplastic (LHCB4.3), found in Arabidopsis thaliana (Mouse-ear cress).